Here is a 155-residue protein sequence, read N- to C-terminus: Endoribonuclease YbeY (155 aa).

His114, His118, and His124 together coordinate Zn(2+).

This sequence belongs to the endoribonuclease YbeY family. Zn(2+) serves as cofactor.

It is found in the cytoplasm. In terms of biological role, single strand-specific metallo-endoribonuclease involved in late-stage 70S ribosome quality control and in maturation of the 3' terminus of the 16S rRNA. In Escherichia coli O157:H7, this protein is Endoribonuclease YbeY.